The chain runs to 115 residues: NADH-ubiquinone oxidoreductase chain 3 (115 aa).

Transmembrane regions (helical) follow at residues 3 to 23 (LILMMILISSLISTILAIVAF), 56 to 76 (FFLVAILFLLFDLEIALLLPL), and 84 to 104 (PTLMLMWAFTIIILLTIGLIY).

This sequence belongs to the complex I subunit 3 family.

The protein resides in the mitochondrion membrane. It carries out the reaction a ubiquinone + NADH + 5 H(+)(in) = a ubiquinol + NAD(+) + 4 H(+)(out). In terms of biological role, core subunit of the mitochondrial membrane respiratory chain NADH dehydrogenase (Complex I) that is believed to belong to the minimal assembly required for catalysis. Complex I functions in the transfer of electrons from NADH to the respiratory chain. The immediate electron acceptor for the enzyme is believed to be ubiquinone. The sequence is that of NADH-ubiquinone oxidoreductase chain 3 (MT-ND3) from Polypterus ornatipinnis (Ornate bichir).